A 567-amino-acid polypeptide reads, in one-letter code: TPR repeat-containing protein MJ1428 (567 aa).

TPR repeat units follow at residues 14 to 47, 48 to 81, 83 to 115, 116 to 148, 150 to 183, 199 to 234, 236 to 268, 269 to 301, 303 to 335, 344 to 379, 380 to 412, 414 to 446, and 505 to 538; these read YEDW…KNTN, PIDW…SPSN, YFAY…IKNE, ELFE…ANSK, LNAL…NPSH, INSY…DENS, ISYY…FNRS, LYYA…NSQN, YAYF…YLEE, LNLY…ENSS, RWWY…NPKD, STLK…VNSL, and AYIY…EMYR.

This is TPR repeat-containing protein MJ1428 from Methanocaldococcus jannaschii (strain ATCC 43067 / DSM 2661 / JAL-1 / JCM 10045 / NBRC 100440) (Methanococcus jannaschii).